The chain runs to 511 residues: Cobyric acid synthase (511 aa).

The GATase cobBQ-type domain occupies 251–443 (LLDIAIICLP…IHGIFDNDVF (193 aa)). The active-site Nucleophile is the C332. H435 is a catalytic residue.

This sequence belongs to the CobB/CobQ family. CobQ subfamily.

The protein operates within cofactor biosynthesis; adenosylcobalamin biosynthesis. In terms of biological role, catalyzes amidations at positions B, D, E, and G on adenosylcobyrinic A,C-diamide. NH(2) groups are provided by glutamine, and one molecule of ATP is hydrogenolyzed for each amidation. The polypeptide is Cobyric acid synthase (Listeria monocytogenes serovar 1/2a (strain ATCC BAA-679 / EGD-e)).